Consider the following 346-residue polypeptide: Heparan sulfate glucosamine 3-O-sulfotransferase 5 (346 aa).

Topologically, residues 1 to 12 are cytoplasmic; sequence MLFKQQAWLRQK. A helical; Signal-anchor for type II membrane protein membrane pass occupies residues 13-32; the sequence is LLVLGSLAVGSLLYLVARVG. At 33 to 346 the chain is on the lumenal side; the sequence is SLDRLQPICP…QITGRTLNWP (314 aa). Position 100–104 (100–104) interacts with 3'-phosphoadenylyl sulfate; that stretch reads KGGTR. Substrate is bound by residues 122–128 and 155–158; these read EIHFFDN and KSPA. 3'-phosphoadenylyl sulfate-binding residues include Arg-183 and Ser-191. Residue 226–227 coordinates substrate; the sequence is YK. Residue Asn-287 is glycosylated (N-linked (GlcNAc...) asparagine). 3'-phosphoadenylyl sulfate is bound at residue Tyr-293. Cys-294 and Cys-304 are disulfide-bonded. 3'-phosphoadenylyl sulfate is bound at residue 309–313; that stretch reads KGRIH.

It belongs to the sulfotransferase 1 family. As to expression, highly expressed in skeletal muscle and fetal brain, and also found in adult brain, spinal cord, cerebellum and colon.

It is found in the golgi apparatus membrane. It catalyses the reaction alpha-D-glucosaminyl-[heparan sulfate](n) + 3'-phosphoadenylyl sulfate = 3-sulfo-alpha-D-glucosaminyl-[heparan sulfate](n) + adenosine 3',5'-bisphosphate + H(+). Functionally, sulfotransferase that utilizes 3'-phospho-5'-adenylyl sulfate (PAPS) to catalyze the transfer of a sulfo group to position 3 of glucosamine residues in heparan. Catalyzes the rate limiting step in the biosynthesis of heparan sulfate (HSact). This modification is a crucial step in the biosynthesis of anticoagulant heparan sulfate as it completes the structure of the antithrombin pentasaccharide binding site. Also generates GlcUA-GlcNS or IdoUA-GlcNS and IdoUA2S-GlcNH2. The substrate-specific O-sulfation generates an enzyme-modified heparan sulfate which acts as a binding receptor to Herpes simplex virus-1 (HSV-1) and permits its entry. The polypeptide is Heparan sulfate glucosamine 3-O-sulfotransferase 5 (HS3ST5) (Homo sapiens (Human)).